The sequence spans 613 residues: Penicillin-binding protein activator LpoA (613 aa).

The N-terminal stretch at 1–29 is a signal peptide; it reads MNSMLNFTHKRKSVSRLLAPVALAVILAG. The N-palmitoyl cysteine moiety is linked to residue Cys-30. Cys-30 carries the S-diacylglycerol cysteine lipid modification.

It belongs to the LpoA family. As to quaternary structure, interacts with PBP1a.

The protein localises to the cell outer membrane. Functionally, regulator of peptidoglycan synthesis that is essential for the function of penicillin-binding protein 1A (PBP1a). In Photobacterium profundum (strain SS9), this protein is Penicillin-binding protein activator LpoA.